Consider the following 302-residue polypeptide: ATP synthase subunit a (302 aa).

7 helical membrane-spanning segments follow: residues valine 61–glycine 81, isoleucine 119–isoleucine 139, phenylalanine 148–valine 168, aspartate 172–isoleucine 192, proline 214–alanine 234, phenylalanine 252–tryptophan 272, and alanine 273–valine 293.

The protein belongs to the ATPase A chain family. F-type ATPases have 2 components, CF(1) - the catalytic core - and CF(0) - the membrane proton channel. CF(1) has five subunits: alpha(3), beta(3), gamma(1), delta(1), epsilon(1). CF(0) has three main subunits: a(1), b(2) and c(9-12). The alpha and beta chains form an alternating ring which encloses part of the gamma chain. CF(1) is attached to CF(0) by a central stalk formed by the gamma and epsilon chains, while a peripheral stalk is formed by the delta and b chains.

The protein resides in the cell inner membrane. Key component of the proton channel; it plays a direct role in the translocation of protons across the membrane. This chain is ATP synthase subunit a, found in Alcanivorax borkumensis (strain ATCC 700651 / DSM 11573 / NCIMB 13689 / SK2).